A 366-amino-acid polypeptide reads, in one-letter code: Peptide chain release factor 2 (366 aa).

The residue at position 251 (glutamine 251) is an N5-methylglutamine.

The protein belongs to the prokaryotic/mitochondrial release factor family. Post-translationally, methylated by PrmC. Methylation increases the termination efficiency of RF2.

The protein resides in the cytoplasm. In terms of biological role, peptide chain release factor 2 directs the termination of translation in response to the peptide chain termination codons UGA and UAA. This is Peptide chain release factor 2 from Campylobacter concisus (strain 13826).